Consider the following 354-residue polypeptide: 4-hydroxy-3-methylbut-2-en-1-yl diphosphate synthase (flavodoxin) (354 aa).

C262, C265, C297, and E304 together coordinate [4Fe-4S] cluster.

The protein belongs to the IspG family. [4Fe-4S] cluster serves as cofactor.

It catalyses the reaction (2E)-4-hydroxy-3-methylbut-2-enyl diphosphate + oxidized [flavodoxin] + H2O + 2 H(+) = 2-C-methyl-D-erythritol 2,4-cyclic diphosphate + reduced [flavodoxin]. Its pathway is isoprenoid biosynthesis; isopentenyl diphosphate biosynthesis via DXP pathway; isopentenyl diphosphate from 1-deoxy-D-xylulose 5-phosphate: step 5/6. Converts 2C-methyl-D-erythritol 2,4-cyclodiphosphate (ME-2,4cPP) into 1-hydroxy-2-methyl-2-(E)-butenyl 4-diphosphate. The chain is 4-hydroxy-3-methylbut-2-en-1-yl diphosphate synthase (flavodoxin) from Helicobacter hepaticus (strain ATCC 51449 / 3B1).